The sequence spans 532 residues: MVIINNLTFNQDYSCVSVSTTKYHKIFNCDPFGEFYSSYQGSSGTKGDKPNDNDKEIIIDKGNGNEYNKIGEDSPTSYLKMLFSTSLTIIIPQNESVGNRLLKIYNLKQNMKICELTFPSHIIDVKLNRKRLCVILESGQIYIYDLSCVRLIKVLEISSFSSKDSEEETHQKLFVGDLGAEDKSLLVLPISNITDQTDLFNTENGVNVTRASDSNILTSLKPLIEFTENKIDKDIITLEDLQKDSNGWVLIYDTIKLKPRLIYKAHDSSLAKITISNDNKKIATASSKGTIIRVCHLESSDDEDVSKPFNISQIINLRRGHNIAKVNCLSFSLDNSILGCGSESNTIHFFRLSKQPHESFEYEEDPANESDPDDEDRSSEDLNQNLANLLISKTPDASAPDQKDSAKSSYFGVLKKKVEGSSRFMNNPYTQTIVRNLPYKNYFENLIWEPPRRAFAYVKLPEYTPPQLFNLHQSKNKVAIGFANTNNNGHLIMLASYQTGQFYHYQLPKPSDQPEPSDSRHECNLIAQYSLL.

WD repeat units follow at residues 265 to 310 (AHDS…KPFN) and 321 to 360 (HNIA…HESF). The L/FRRG motif signature appears at 317 to 321 (LRRGH). The interval 360–380 (FEYEEDPANESDPDDEDRSSE) is disordered. The span at 361–378 (EYEEDPANESDPDDEDRS) shows a compositional bias: acidic residues.

Belongs to the WD repeat PROPPIN family.

The protein localises to the cytoplasm. Its subcellular location is the membrane. It is found in the vacuole membrane. Its function is as follows. Required for cytoplasm to vacuole transport (Cvt) vesicles formation and mitophagy. Involved in binding of phosphatidylethanolamine to ATG8 and in recruitment of ATG8 and ATG5 to the pre-autophagosomal structure. Protects ATG8 from ARG4-mediated cleavage. The protein is Autophagy-related protein 21 (ATG21) of Debaryomyces hansenii (strain ATCC 36239 / CBS 767 / BCRC 21394 / JCM 1990 / NBRC 0083 / IGC 2968) (Yeast).